The primary structure comprises 93 residues: Exodeoxyribonuclease 7 small subunit (93 aa).

The disordered stretch occupies residues methionine 1–asparagine 22.

This sequence belongs to the XseB family. In terms of assembly, heterooligomer composed of large and small subunits.

The protein resides in the cytoplasm. It catalyses the reaction Exonucleolytic cleavage in either 5'- to 3'- or 3'- to 5'-direction to yield nucleoside 5'-phosphates.. Functionally, bidirectionally degrades single-stranded DNA into large acid-insoluble oligonucleotides, which are then degraded further into small acid-soluble oligonucleotides. In Burkholderia multivorans (strain ATCC 17616 / 249), this protein is Exodeoxyribonuclease 7 small subunit.